The sequence spans 1839 residues: Nuclear pore complex protein DDB_G0274915 (1839 aa).

2 stretches are compositionally biased toward polar residues: residues 1–27 and 35–54; these read MNGR…NTIN and NGSL…QTNK. Disordered regions lie at residues 1–54, 78–150, 325–367, 480–568, 589–636, 657–705, 739–810, 818–837, 846–1106, and 1129–1839; these read MNGR…QTNK, DESS…ISDD, KQFD…PNAD, PLNK…FSTT, TTIA…GGGV, VSTS…DVPG, TTTT…DSKT, PTTE…SSLF, TTPS…FSSN, and TTAT…AKKK. The segment covering 80–90 has biased composition (low complexity); the sequence is SSSSSSSSSSS. A compositionally biased stretch (polar residues) spans 91–101; it reads YDDGNNIPQKG. Composition is skewed to low complexity over residues 102 to 148 and 329 to 343; these read SSTT…INIS and DNNN…SIYN. The segment covering 344 to 354 has biased composition (polar residues); it reads RQSIYSPNSKI. Composition is skewed to low complexity over residues 495–568 and 589–607; these read TYAT…FSTT and TTIA…SSSS. The span at 616–628 shows a compositional bias: polar residues; that stretch reads MFTSDSNKSNLFS. Low complexity-rich tracts occupy residues 658 to 671 and 739 to 760; these read STST…SKSS and TTTT…TTDK. Residues 761-773 are compositionally biased toward basic and acidic residues; the sequence is SSADKSSADKSST. Low complexity-rich tracts occupy residues 774–803, 827–837, and 846–871; these read DKST…TTTT, PTTSLTSSSLF, and TTPS…NTTT. 2 stretches are compositionally biased toward acidic residues: residues 896–923 and 944–958; these read ESDE…EAEE and LEAE…DSDE. 2 stretches are compositionally biased toward low complexity: residues 1005–1021 and 1046–1060; these read GSSL…SFLT and SSSS…IPTT. Over residues 1061-1070 the composition is skewed to basic and acidic residues; sequence SKKEKIDDKP. Low complexity predominate over residues 1071–1092; the sequence is STTTTTTTTSLFGSTTTSGLFS. Over residues 1093–1106 the composition is skewed to polar residues; it reads NPSTTSTGSLFSSN. Low complexity-rich tracts occupy residues 1129–1242 and 1250–1292; these read TTAT…FGST and ATTT…GLFG. Residues 1293-1310 are compositionally biased toward polar residues; it reads ASSSTTPSTGLFGSATTP. 2 stretches are compositionally biased toward low complexity: residues 1311–1384 and 1397–1498; these read STGL…TTPP and LFGT…TTAT. Over residues 1507–1521 the composition is skewed to polar residues; the sequence is TAPSTGLFGSTTATN. A compositionally biased stretch (low complexity) spans 1522-1673; sequence PSTGLFGSTT…SSTPFGASPF (152 aa). Positions 1676-1708 are enriched in polar residues; that stretch reads PTSTSSPPFGAPTSASSTPFGAPQISTSSSTNL. Residues 1712-1810 are compositionally biased toward low complexity; sequence ASSSTAAPSF…PFGSTPSTAP (99 aa).

This Dictyostelium discoideum (Social amoeba) protein is Nuclear pore complex protein DDB_G0274915.